Consider the following 222-residue polypeptide: Cytidylate kinase (222 aa).

An ATP-binding site is contributed by 12-20; it reads GPSGAGKGT.

The protein belongs to the cytidylate kinase family. Type 1 subfamily.

The protein localises to the cytoplasm. It catalyses the reaction CMP + ATP = CDP + ADP. It carries out the reaction dCMP + ATP = dCDP + ADP. The polypeptide is Cytidylate kinase (Methylococcus capsulatus (strain ATCC 33009 / NCIMB 11132 / Bath)).